An 882-amino-acid chain; its full sequence is Valine--tRNA ligase (882 aa).

Residues proline 50 to histidine 60 carry the 'HIGH' region motif. Residues lysine 526–serine 530 carry the 'KMSKS' region motif. Lysine 529 lines the ATP pocket. The stretch at leucine 810–glutamate 881 forms a coiled coil.

This sequence belongs to the class-I aminoacyl-tRNA synthetase family. ValS type 1 subfamily. Monomer.

It localises to the cytoplasm. The enzyme catalyses tRNA(Val) + L-valine + ATP = L-valyl-tRNA(Val) + AMP + diphosphate. Catalyzes the attachment of valine to tRNA(Val). As ValRS can inadvertently accommodate and process structurally similar amino acids such as threonine, to avoid such errors, it has a 'posttransfer' editing activity that hydrolyzes mischarged Thr-tRNA(Val) in a tRNA-dependent manner. This chain is Valine--tRNA ligase, found in Listeria innocua serovar 6a (strain ATCC BAA-680 / CLIP 11262).